Consider the following 361-residue polypeptide: Protein SSUH2 homolog (361 aa).

It is found in the cytoplasm. The protein resides in the nucleus. Its function is as follows. Plays a role in odontogenesis. The sequence is that of Protein SSUH2 homolog from Danio rerio (Zebrafish).